The primary structure comprises 543 residues: ATP synthase subunit alpha (543 aa).

Residue 174-181 (GDRQTGKT) coordinates ATP. Residues 521 to 543 (VEKKPDVDKAAPVDQEKIVAGEK) form a disordered region.

Belongs to the ATPase alpha/beta chains family. In terms of assembly, F-type ATPases have 2 components, CF(1) - the catalytic core - and CF(0) - the membrane proton channel. CF(1) has five subunits: alpha(3), beta(3), gamma(1), delta(1), epsilon(1). CF(0) has three main subunits: a(1), b(2) and c(9-12). The alpha and beta chains form an alternating ring which encloses part of the gamma chain. CF(1) is attached to CF(0) by a central stalk formed by the gamma and epsilon chains, while a peripheral stalk is formed by the delta and b chains.

Its subcellular location is the cell membrane. It catalyses the reaction ATP + H2O + 4 H(+)(in) = ADP + phosphate + 5 H(+)(out). Functionally, produces ATP from ADP in the presence of a proton gradient across the membrane. The alpha chain is a regulatory subunit. This is ATP synthase subunit alpha from Bifidobacterium longum (strain DJO10A).